Reading from the N-terminus, the 339-residue chain is D-erythrose-4-phosphate dehydrogenase (339 aa).

Residue 11-12 (RI) coordinates NAD(+). Substrate contacts are provided by residues 153–155 (SCT), R199, 212–213 (TK), and R235. C154 serves as the catalytic Nucleophile. N317 contributes to the NAD(+) binding site.

This sequence belongs to the glyceraldehyde-3-phosphate dehydrogenase family. Epd subfamily. In terms of assembly, homotetramer.

It is found in the cytoplasm. It catalyses the reaction D-erythrose 4-phosphate + NAD(+) + H2O = 4-phospho-D-erythronate + NADH + 2 H(+). It functions in the pathway cofactor biosynthesis; pyridoxine 5'-phosphate biosynthesis; pyridoxine 5'-phosphate from D-erythrose 4-phosphate: step 1/5. Its function is as follows. Catalyzes the NAD-dependent conversion of D-erythrose 4-phosphate to 4-phosphoerythronate. The sequence is that of D-erythrose-4-phosphate dehydrogenase from Shewanella pealeana (strain ATCC 700345 / ANG-SQ1).